The primary structure comprises 246 residues: Sugar fermentation stimulation protein homolog (246 aa).

This sequence belongs to the SfsA family.

In Prochlorococcus marinus (strain MIT 9301), this protein is Sugar fermentation stimulation protein homolog.